The chain runs to 627 residues: tRNA uridine 5-carboxymethylaminomethyl modification enzyme MnmG (627 aa).

FAD is bound by residues 16–21, V128, and S183; that span reads GAGHAG. NAD(+) is bound at residue 275–289; that stretch reads GPRYCPSIEDKVMRF. Q372 lines the FAD pocket.

Belongs to the MnmG family. In terms of assembly, homodimer. Heterotetramer of two MnmE and two MnmG subunits. FAD is required as a cofactor.

Its subcellular location is the cytoplasm. In terms of biological role, NAD-binding protein involved in the addition of a carboxymethylaminomethyl (cmnm) group at the wobble position (U34) of certain tRNAs, forming tRNA-cmnm(5)s(2)U34. In Geobacter sulfurreducens (strain ATCC 51573 / DSM 12127 / PCA), this protein is tRNA uridine 5-carboxymethylaminomethyl modification enzyme MnmG.